We begin with the raw amino-acid sequence, 308 residues long: UPF0026 protein HP_0117 (308 aa).

In terms of domain architecture, Radical SAM core spans 18-248; that stretch reads FGKSLGVDLS…SLPKRSITQA (231 aa). Residues Cys-33, Cys-37, and Cys-40 each contribute to the [4Fe-4S] cluster site.

Belongs to the UPF0026 family. Requires [4Fe-4S] cluster as cofactor.

The sequence is that of UPF0026 protein HP_0117 from Helicobacter pylori (strain ATCC 700392 / 26695) (Campylobacter pylori).